The chain runs to 288 residues: MDMSGMDGMDHMSSTSSNMSMSMKMYFHGTIGGDLLWFASWMPSSAGATVGVCIGLFILAIFERYLVAFRRACDAAWRRGQVGYVRPCSNGPLVFSSGKSTSLPPPVLFNRRSSTKKEKDVYNPLTPSDYALESNQDGSVEPVTPYTPSIHALRESQEGSSAPSYAHSQQGQAQAQGSGVGCDPCAEGRVAEIERCKEKAVERGLVHSHLPKAVRRSLDPGREGRWSRPFRLAVDVPRGLLQALQTLIHYLLMLVVMTFNIWWMISVVIGCGVGEMLFGRFGSSHVGH.

N-linked (GlcNAc...) asparagine glycosylation occurs at asparagine 18. A helical transmembrane segment spans residues methionine 42–phenylalanine 62. Disordered stretches follow at residues proline 106–leucine 125 and arginine 154–valine 180. Polar residues predominate over residues glutamate 158–histidine 167. The segment covering serine 168–glycine 177 has biased composition (low complexity). Residues leucine 251–cysteine 271 form a helical membrane-spanning segment.

Belongs to the copper transporter (Ctr) (TC 1.A.56) family. SLC31A subfamily. In terms of assembly, interacts with the copper acquisition factor BIM1.

It localises to the cell membrane. Functionally, high affinity copper transporter involved in Cu(+) import into the cell upon copper-limitating conditions. Functions with BIM1 and probably also FRE4 and FRE7, where FRE4 and FRE7 metalloreductases liberate the Cu(2+) bound to the BIM1 copper-binding site for subsequent import of Cu(+) into the cell by CTR1, via the reduction of BIM1-bound Cu(2+) to Cu(+) to reduce binding affinity for BIM1 but increase affinity for CTR1. The BIM1-CTR1 pathway for copper uptake plays a key role in colonization in the brain where copper amounts are low and thus in cryptococcal meningitis. The protein is CUF1-dependent copper transporter 1 of Cryptococcus neoformans var. grubii serotype A (strain H99 / ATCC 208821 / CBS 10515 / FGSC 9487) (Filobasidiella neoformans var. grubii).